Consider the following 372-residue polypeptide: Mitogen-activated protein kinase spk1 (372 aa).

Residues 1–25 (MASATSTPTIADGNSNKESVATSRS) show a composition bias toward polar residues. A disordered region spans residues 1 to 29 (MASATSTPTIADGNSNKESVATSRSPHTH). The Protein kinase domain maps to 39–327 (YEMINLIGQG…AEEALKHPYV (289 aa)). Residues 45 to 53 (IGQGAYGVV) and lysine 68 contribute to the ATP site. Aspartate 163 (proton acceptor) is an active-site residue. Phosphothreonine is present on threonine 199. The short motif at 199–201 (TEY) is the TXY element. A Phosphotyrosine modification is found at tyrosine 201.

Belongs to the protein kinase superfamily. CMGC Ser/Thr protein kinase family. MAP kinase subfamily. Mg(2+) is required as a cofactor. Post-translationally, dually phosphorylated on Thr-199 and Tyr-201, which activates the enzyme.

Its subcellular location is the nucleus. It catalyses the reaction L-seryl-[protein] + ATP = O-phospho-L-seryl-[protein] + ADP + H(+). It carries out the reaction L-threonyl-[protein] + ATP = O-phospho-L-threonyl-[protein] + ADP + H(+). With respect to regulation, activated by tyrosine and threonine phosphorylation. Its function is as follows. Involved in mating signal transduction pathway. The polypeptide is Mitogen-activated protein kinase spk1 (spk1) (Schizosaccharomyces pombe (strain 972 / ATCC 24843) (Fission yeast)).